A 63-amino-acid polypeptide reads, in one-letter code: DNA gyrase inhibitor YacG (63 aa).

4 residues coordinate Zn(2+): cysteine 9, cysteine 12, cysteine 28, and cysteine 32.

Belongs to the DNA gyrase inhibitor YacG family. In terms of assembly, interacts with GyrB. The cofactor is Zn(2+).

Its function is as follows. Inhibits all the catalytic activities of DNA gyrase by preventing its interaction with DNA. Acts by binding directly to the C-terminal domain of GyrB, which probably disrupts DNA binding by the gyrase. This Salmonella paratyphi A (strain AKU_12601) protein is DNA gyrase inhibitor YacG.